Here is a 1450-residue protein sequence, read N- to C-terminus: MAHMVGADDIESLRVELAEIGRSIRSSFRRHTSSFRSSSSIYEVENDGDVNDHDAEYALQWAEIERLPTVKRMRSTLLDDGDESMTEKGRRVVDVTKLGAVERHLMIEKLIKHIENDNLKLLKKIRRRIDRVGMELPTIEVRYESLKVVAECEVVEGKALPTLWNTAKRVLSELVKLTGAKTHEAKINIINDVNGIIKPGRLTLLLGPPSCGKTTLLKALSGNLENNLKCSGEISYNGHRLDEFVPQKTSAYISQYDLHIAEMTVRETVDFSARCQGVGSRTDIMMEVSKREKEKGIIPDTEVDAYMKAISVEGLQRSLQTDYILKILGLDICAEILIGDVMRRGISGGQKKRLTTAEMIVGPTKALFMDEITNGLDSSTAFQIVKSLQQFAHISSATVLVSLLQPAPESYDLFDDIMLMAKGRIVYHGPRGEVLNFFEDCGFRCPERKGVADFLQEVISKKDQAQYWWHEDLPYSFVSVEMLSKKFKDLSIGKKIEDTLSKPYDRSKSHKDALSFSVYSLPNWELFIACISREYLLMKRNYFVYIFKTAQLVMAAFITMTVFIRTRMGIDIIHGNSYMSALFFALIILLVDGFPELSMTAQRLAVFYKQKQLCFYPAWAYAIPATVLKVPLSFFESLVWTCLSYYVIGYTPEASRFFKQFILLFAVHFTSISMFRCLAAIFQTVVASITAGSFGILFTFVFAGFVIPPPSMPAWLKWGFWANPLSYGEIGLSVNEFLAPRWNQMQPNNFTLGRTILQTRGMDYNGYMYWVSLCALLGFTVLFNIIFTLALTFLKSPTSSRAMISQDKLSELQGTEKSTEDSSVRKKTTDSPVKTEEEDKMVLPFKPLTVTFQDLNYFVDMPVEMRDQGYDQKKLQLLSDITGAFRPGILTALMGVSGAGKTTLLDVLAGRKTSGYIEGDIRISGFPKVQETFARVSGYCEQTDIHSPNITVEESVIYSAWLRLAPEIDATTKTKFVKQVLETIELDEIKDSLVGVTGVSGLSTEQRKRLTIAVELVANPSIIFMDEPTTGLDARAAAIVMRAVKNVADTGRTIVCTIHQPSIDIFEAFDELVLLKRGGRMIYTGPLGQHSRHIIEYFESVPEIPKIKDNHNPATWMLDVSSQSVEIELGVDFAKIYHDSALYKRNSELVKQLSQPDSGSSDIQFKRTFAQSWWGQFKSILWKMNLSYWRSPSYNLMRMMHTLVSSLIFGALFWKQGQNLDTQQSMFTVFGAIYGLVLFLGINNCASALQYFETERNVMYRERFAGMYSATAYALGQVVTEIPYIFIQAAEFVIVTYPMIGFYPSAYKVFWSLYSMFCSLLTFNYLAMFLVSITPNFMVAAILQSLFYVGFNLFSGFLIPQTQVPGWWIWLYYLTPTSWTLNGFISSQYGDIHEEINVFGQSTTVARFLKDYFGFHHDLLAVTAVVQIAFPIALASMFAFFVGKLNFQRR.

In terms of domain architecture, ABC transporter 1 spans 175–447 (VKLTGAKTHE…FEDCGFRCPE (273 aa)). 207-214 (GPPSCGKT) provides a ligand contact to ATP. The region spanning 525–737 (ELFIACISRE…GEIGLSVNEF (213 aa)) is the ABC transmembrane type-2 1 domain. Transmembrane regions (helical) follow at residues 544–564 (VYIF…TVFI), 581–601 (ALFF…SMTA), 615–635 (FYPA…LSFF), 661–681 (FILL…LAAI), 687–707 (ASIT…GFVI), and 773–793 (LCAL…ALTF). The segment at 810 to 838 (SELQGTEKSTEDSSVRKKTTDSPVKTEEE) is disordered. Basic and acidic residues predominate over residues 817-838 (KSTEDSSVRKKTTDSPVKTEEE). In terms of domain architecture, ABC transporter 2 spans 850–1103 (VTFQDLNYFV…IIEYFESVPE (254 aa)). 895 to 902 (GVSGAGKT) contacts ATP. Residues 1175–1389 (GQFKSILWKM…TLNGFISSQY (215 aa)) enclose the ABC transmembrane type-2 2 domain. 7 helical membrane-spanning segments follow: residues 1194–1214 (YNLM…ALFW), 1226–1246 (MFTV…NNCA), 1282–1302 (IPYI…MIGF), 1313–1333 (LYSM…LVSI), 1339–1359 (VAAI…GFLI), 1365–1385 (PGWW…NGFI), and 1422–1442 (VTAV…AFFV).

Belongs to the ABC transporter superfamily. ABCG family. PDR (TC 3.A.1.205) subfamily. In terms of tissue distribution, expressed in roots and, to a lower extent, in seedlings.

The protein resides in the cell membrane. Together with ABCG36, regulates auxin homeostasis and responses by playing a dual role in coumarin (and derivatives) and in the auxin precursor indole 3-butyric acid (IBA) efflux transport, thus influencing roots and root hairs development. Mediates coumarin exudation in the rhizosphere, especially in iron (Fe) deficient conditions, with a strong specificity for highly oxygenated compounds such as scopoletin and derivatives, dihydroxyscopoletin, esculetin, fraxin, fraxetin and esculin; these molecules improve plant Fe nutrition. Involved in the cellular detoxification of xenobiotics by promoting the excretion of some auxinic herbicides including 2,4-dichlorophenoxyacetic acid (2,4-D), 4-(2,4-dichlorophenoxy)butyric acid (2,4-DB) and other members of the phenoxyalkanoic acid family as well as the polar auxin transport inhibitor, napthylphthalamic acid (NPA). May be a general defense protein. This chain is ABC transporter G family member 37, found in Arabidopsis thaliana (Mouse-ear cress).